Consider the following 887-residue polypeptide: PAN2-PAN3 deadenylation complex subunit Pan3 (887 aa).

Residues 49–77 (GVKLKYCRYYAKDKTCFYGEECQFLHEDP) form a C3H1-type zinc finger. 3 disordered regions span residues 111 to 139 (GGGAGPPAGPKKPELGVPGAATAGGGLDG), 280 to 307 (ENNLQTPNPTASEFIPKGGSTSRLSNVS), and 321 to 393 (PSMG…GQVI). Positions 147–498 (MDGGALTDAS…PPPNRIQKSS (352 aa)) are necessary and sufficient for interaction with PABPC1 but not needed for interaction with PAN2. 2 stretches are compositionally biased toward polar residues: residues 281 to 290 (NNLQTPNPTA) and 298 to 307 (GSTSRLSNVS). A PABPC-interacting motif-2 (PAM-2) motif is present at residues 284-299 (QTPNPTASEFIPKGGS). Residues Ser354 and Ser361 each carry the phosphoserine modification. A pseudokinase domain region spans residues 463-750 (QIDQADMPAV…SVNDIMPMIG (288 aa)). Residues Arg521, 570 to 577 (DFHAGGET), and 644 to 645 (TK) contribute to the ATP site. The interval 789–887 (TINERPEFQK…ELIAAANGQL (99 aa)) is knob domain.

The protein belongs to the protein kinase superfamily. PAN3 family. Homodimer. Forms a heterotrimer with a catalytic subunit PAN2 to form the poly(A)-nuclease (PAN) deadenylation complex. Interacts (via PAM-2 motif) with poly(A)-binding protein PABPC1 (via PABC domain), conferring substrate specificity of the enzyme complex. Interacts with the GW182 family proteins TNRC6A, TNRC6B and TNRC6C. Interacts with YTHDF3. In terms of assembly, interacts with PAN2. Interacts (via N-terminus) with PABPC1 at lower efficiency than isoform 3. As to quaternary structure, interacts with PAN2. Interacts (via N-terminus) with PABPC1 at higher efficiency than isoform 1.

Its subcellular location is the cytoplasm. It localises to the P-body. The protein resides in the nucleus. In terms of biological role, regulatory subunit of the poly(A)-nuclease (PAN) deadenylation complex, one of two cytoplasmic mRNA deadenylases involved in general and miRNA-mediated mRNA turnover. PAN specifically shortens poly(A) tails of RNA and the activity is stimulated by poly(A)-binding protein (PABP). PAN deadenylation is followed by rapid degradation of the shortened mRNA tails by the CCR4-NOT complex. Deadenylated mRNAs are then degraded by two alternative mechanisms, namely exosome-mediated 3'-5' exonucleolytic degradation, or deadenylation-dependent mRNA decapping and subsequent 5'-3' exonucleolytic degradation by XRN1. PAN3 acts as a regulator for PAN activity, recruiting the catalytic subunit PAN2 to mRNA via its interaction with RNA and PABP, and to miRNA targets via its interaction with GW182 family proteins. Decreases PAN2-mediated deadenylation, possibly by preventing progression into the second CCR4-NOT mediated stage of biphasic deadenylation. Has a significant effect on mRNA stability, generally stabilizing a subset of the transcriptome. Stabilizes mRNAs degraded by the AU-rich element (ARE)-mediated mRNA decay pathway but promotes degradation of mRNAs by the microRNA-mediated pathway. Its activity influences mRNP remodeling, specifically reducing formation of a subset of P-bodies containing GW220, an isoform of TNRC6A. Functionally, enhances PAN2 deadenylase activity and has an extensive effect on mRNA stability, generally enhancing mRNA decay across the transcriptome by multiple pathways, including the AU-rich element (ARE)-mediated pathway, microRNA-mediated pathway and the nonsense-mediated pathway (NMD). Its activity is required for efficient P-body formation. May be involved in regulating mRNAs of genes involved in cell cycle progression and cell proliferation. The chain is PAN2-PAN3 deadenylation complex subunit Pan3 from Mus musculus (Mouse).